Consider the following 175-residue polypeptide: AKYDAFIAALTEALRVIAGAFEVHAVKPATEEVPAAKIPAGELQIVDKIDAAFKIAATAANSAPANDKFTVFEGAFNKAIKERHGGAYETYKFIPSLEASRSKQAYGATVARAPEVKYAVFEAGLTKAITAMSEAQKVAKPVRSVTAAAAGAATAAGGAATVAASRPTSAGGYKV.

It belongs to the Poa p IX/Phl p VI allergen family.

This Phalaris aquatica (Canary grass) protein is Major pollen allergen Pha a 5.4.